The sequence spans 269 residues: Hydroxyethylthiazole kinase (269 aa).

A substrate-binding site is contributed by M45. Positions 121 and 167 each coordinate ATP. Residue G194 coordinates substrate.

This sequence belongs to the Thz kinase family. Mg(2+) serves as cofactor.

The catalysed reaction is 5-(2-hydroxyethyl)-4-methylthiazole + ATP = 4-methyl-5-(2-phosphooxyethyl)-thiazole + ADP + H(+). Its pathway is cofactor biosynthesis; thiamine diphosphate biosynthesis; 4-methyl-5-(2-phosphoethyl)-thiazole from 5-(2-hydroxyethyl)-4-methylthiazole: step 1/1. Functionally, catalyzes the phosphorylation of the hydroxyl group of 4-methyl-5-beta-hydroxyethylthiazole (THZ). The sequence is that of Hydroxyethylthiazole kinase from Bacillus cereus (strain ATCC 14579 / DSM 31 / CCUG 7414 / JCM 2152 / NBRC 15305 / NCIMB 9373 / NCTC 2599 / NRRL B-3711).